The primary structure comprises 141 residues: Transcriptional regulator MraZ (141 aa).

2 consecutive SpoVT-AbrB domains span residues 5–47 and 76–119; these read TFNI…KPQD and ANFV…DKKL.

Belongs to the MraZ family. Homooctamer. Forms a ring.

The protein localises to the cytoplasm. Its subcellular location is the nucleoid. This is Transcriptional regulator MraZ from Mycoplasma pneumoniae (strain ATCC 29342 / M129 / Subtype 1) (Mycoplasmoides pneumoniae).